The primary structure comprises 256 residues: Doublecortin domain-containing protein (256 aa).

The segment at 71–103 is partial p25alpha domain; that stretch reads NVFERLTDTAYYTGSHRERFDEFGNGRGIAGRE. Residues 152–226 form the Doublecortin domain; it reads RLMWLYRNGD…AKYLCTSGEP (75 aa).

It localises to the cytoplasm. The protein resides in the cytoskeleton. Specifically required in the formation and maintenance of the conoid fibers; the conoid is a component of the cytoskeletal apical complex, which is composed of a left-handed spiral of 14 fibers made from a nontubular tubulin polymer. Promotes the organization, curvature, and stability of the conoid fibers, and probably bridges other conoid components to the tubulin core. The sequence is that of Doublecortin domain-containing protein from Toxoplasma gondii (strain ATCC 50861 / VEG).